Reading from the N-terminus, the 238-residue chain is Ribonuclease-like storage protein (238 aa).

Positions 1–23 are cleaved as a signal peptide; the sequence is MRAIYIISVIIVSLSIFSWGGNA. Gln37 contributes to the RNA binding site. An intrachain disulfide couples Cys43 to Cys49. RNA-binding positions include His61, Phe109, 112–113, and 116–117; these read HE and KH. His61 serves as the catalytic Proton donor. Disulfide bonds link Cys76–Cys120 and Cys196–Cys207. Glu113 is a catalytic residue. The active-site Proton acceptor is the His117.

This sequence belongs to the RNase T2 family. In terms of assembly, homodimer. As to expression, root.

May act as a storage protein providing a nitrogen source. Seems to have no RNase activity although it has conserved the active site residues. This is Ribonuclease-like storage protein from Panax ginseng (Korean ginseng).